The primary structure comprises 505 residues: Tyrosine-protein kinase Blk (505 aa).

Positions 1-37 (MGLVSSKKPDKEKPIKEKDKGQWSPLKVSAQDKDAPP) are disordered. Glycine 2 is lipidated: N-myristoyl glycine. Basic and acidic residues predominate over residues 7–21 (KKPDKEKPIKEKDKG). The 61-residue stretch at 58–118 (EDKHFVVALY…PSNFVARVES (61 aa)) folds into the SH3 domain. The region spanning 124–220 (WFFRSQGRKE…GLCQRLTLPC (97 aa)) is the SH2 domain. A Protein kinase domain is found at 241–494 (LRLVRKLGSG…FLQSVLEDFY (254 aa)). ATP-binding positions include 247–255 (LGSGQFGEV) and lysine 269. Aspartate 360 serves as the catalytic Proton acceptor. The residue at position 389 (tyrosine 389) is a Phosphotyrosine; by autocatalysis.

The protein belongs to the protein kinase superfamily. Tyr protein kinase family. SRC subfamily. In terms of assembly, interacts with CBL (via SH2 domain). Interacts with CD79A and CD79B (via SH2 domain). In terms of processing, phosphorylated on tyrosine residues after antibody-mediated surface engagement of the B-cell antigen receptor (BCR). Ubiquitination of activated BLK by the UBE3A ubiquitin protein ligase leads to its degradation by the ubiquitin-proteasome pathway. Expressed in lymphatic organs, pancreatic islets, Leydig cells, striate ducts of salivary glands and hair follicles.

The protein resides in the cell membrane. It carries out the reaction L-tyrosyl-[protein] + ATP = O-phospho-L-tyrosyl-[protein] + ADP + H(+). With respect to regulation, antibody-mediated surface engagement of the B-cell antigen receptor (BCR) which results in the phosphorylation of BLK on tyrosine residues, stimulates the enzymatic activity. Functionally, non-receptor tyrosine kinase involved in B-lymphocyte development, differentiation and signaling. B-cell receptor (BCR) signaling requires a tight regulation of several protein tyrosine kinases and phosphatases, and associated coreceptors. Binding of antigen to the B-cell antigen receptor (BCR) triggers signaling that ultimately leads to B-cell activation. Signaling through BLK plays an important role in transmitting signals through surface immunoglobulins and supports the pro-B to pre-B transition, as well as the signaling for growth arrest and apoptosis downstream of B-cell receptor. Specifically binds and phosphorylates CD79A at 'Tyr-188'and 'Tyr-199', as well as CD79B at 'Tyr-196' and 'Tyr-207'. Also phosphorylates the immunoglobulin G receptors FCGR2A, FCGR2B and FCGR2C. With FYN and LYN, plays an essential role in pre-B-cell receptor (pre-BCR)-mediated NF-kappa-B activation. Also contributes to BTK activation by indirectly stimulating BTK intramolecular autophosphorylation. In pancreatic islets, acts as a modulator of beta-cells function through the up-regulation of PDX1 and NKX6-1 and consequent stimulation of insulin secretion in response to glucose. Phosphorylates CGAS, promoting retention of CGAS in the cytosol. This chain is Tyrosine-protein kinase Blk (BLK), found in Homo sapiens (Human).